Here is a 344-residue protein sequence, read N- to C-terminus: Holliday junction branch migration complex subunit RuvB (344 aa).

Positions 4-184 are large ATPase domain (RuvB-L); the sequence is QDRIIDANAK…FGIVQRLEFY (181 aa). ATP is bound by residues Arg-24, Gly-65, Lys-68, Thr-69, Thr-70, 131–133, Arg-174, Tyr-184, and Arg-221; that span reads EDF. Thr-69 contributes to the Mg(2+) binding site. Residues 185–255 are small ATPAse domain (RuvB-S); that stretch reads NIEDLTHIVE…IADLALNMLN (71 aa). A head domain (RuvB-H) region spans residues 258–344; that stretch reads EHGFDHMDRR…ALKQDSLPGI (87 aa). DNA contacts are provided by Arg-294, Arg-313, and Arg-318.

The protein belongs to the RuvB family. Homohexamer. Forms an RuvA(8)-RuvB(12)-Holliday junction (HJ) complex. HJ DNA is sandwiched between 2 RuvA tetramers; dsDNA enters through RuvA and exits via RuvB. An RuvB hexamer assembles on each DNA strand where it exits the tetramer. Each RuvB hexamer is contacted by two RuvA subunits (via domain III) on 2 adjacent RuvB subunits; this complex drives branch migration. In the full resolvosome a probable DNA-RuvA(4)-RuvB(12)-RuvC(2) complex forms which resolves the HJ.

It localises to the cytoplasm. The catalysed reaction is ATP + H2O = ADP + phosphate + H(+). The RuvA-RuvB-RuvC complex processes Holliday junction (HJ) DNA during genetic recombination and DNA repair, while the RuvA-RuvB complex plays an important role in the rescue of blocked DNA replication forks via replication fork reversal (RFR). RuvA specifically binds to HJ cruciform DNA, conferring on it an open structure. The RuvB hexamer acts as an ATP-dependent pump, pulling dsDNA into and through the RuvAB complex. RuvB forms 2 homohexamers on either side of HJ DNA bound by 1 or 2 RuvA tetramers; 4 subunits per hexamer contact DNA at a time. Coordinated motions by a converter formed by DNA-disengaged RuvB subunits stimulates ATP hydrolysis and nucleotide exchange. Immobilization of the converter enables RuvB to convert the ATP-contained energy into a lever motion, pulling 2 nucleotides of DNA out of the RuvA tetramer per ATP hydrolyzed, thus driving DNA branch migration. The RuvB motors rotate together with the DNA substrate, which together with the progressing nucleotide cycle form the mechanistic basis for DNA recombination by continuous HJ branch migration. Branch migration allows RuvC to scan DNA until it finds its consensus sequence, where it cleaves and resolves cruciform DNA. The sequence is that of Holliday junction branch migration complex subunit RuvB from Saccharophagus degradans (strain 2-40 / ATCC 43961 / DSM 17024).